The sequence spans 607 residues: UvrABC system protein C (607 aa).

A GIY-YIG domain is found at 16–94; the sequence is GRPGVYRMFD…IKEWRPPYNI (79 aa). The UVR domain occupies 203–238; the sequence is QQLGNELNAEMEKAAMALNFEKAAELRDQIALLRRV.

The protein belongs to the UvrC family. As to quaternary structure, interacts with UvrB in an incision complex.

It localises to the cytoplasm. Its function is as follows. The UvrABC repair system catalyzes the recognition and processing of DNA lesions. UvrC both incises the 5' and 3' sides of the lesion. The N-terminal half is responsible for the 3' incision and the C-terminal half is responsible for the 5' incision. This chain is UvrABC system protein C, found in Pseudomonas entomophila (strain L48).